The chain runs to 210 residues: Thiamine-phosphate synthase (210 aa).

4-amino-2-methyl-5-(diphosphooxymethyl)pyrimidine-binding positions include 38-42 and asparagine 70; that span reads QFREK. Mg(2+) is bound by residues aspartate 71 and aspartate 90. Serine 107 is a binding site for 4-amino-2-methyl-5-(diphosphooxymethyl)pyrimidine. 132–134 contributes to the 2-[(2R,5Z)-2-carboxy-4-methylthiazol-5(2H)-ylidene]ethyl phosphate binding site; sequence TKT. Lysine 135 is a 4-amino-2-methyl-5-(diphosphooxymethyl)pyrimidine binding site. 183-184 is a binding site for 2-[(2R,5Z)-2-carboxy-4-methylthiazol-5(2H)-ylidene]ethyl phosphate; sequence IS.

This sequence belongs to the thiamine-phosphate synthase family. Requires Mg(2+) as cofactor.

It carries out the reaction 2-[(2R,5Z)-2-carboxy-4-methylthiazol-5(2H)-ylidene]ethyl phosphate + 4-amino-2-methyl-5-(diphosphooxymethyl)pyrimidine + 2 H(+) = thiamine phosphate + CO2 + diphosphate. It catalyses the reaction 2-(2-carboxy-4-methylthiazol-5-yl)ethyl phosphate + 4-amino-2-methyl-5-(diphosphooxymethyl)pyrimidine + 2 H(+) = thiamine phosphate + CO2 + diphosphate. The catalysed reaction is 4-methyl-5-(2-phosphooxyethyl)-thiazole + 4-amino-2-methyl-5-(diphosphooxymethyl)pyrimidine + H(+) = thiamine phosphate + diphosphate. It participates in cofactor biosynthesis; thiamine diphosphate biosynthesis; thiamine phosphate from 4-amino-2-methyl-5-diphosphomethylpyrimidine and 4-methyl-5-(2-phosphoethyl)-thiazole: step 1/1. Its function is as follows. Condenses 4-methyl-5-(beta-hydroxyethyl)thiazole monophosphate (THZ-P) and 2-methyl-4-amino-5-hydroxymethyl pyrimidine pyrophosphate (HMP-PP) to form thiamine monophosphate (TMP). This is Thiamine-phosphate synthase from Archaeoglobus fulgidus (strain ATCC 49558 / DSM 4304 / JCM 9628 / NBRC 100126 / VC-16).